A 593-amino-acid polypeptide reads, in one-letter code: MKCQRIEDDFTLKFYVFLLINTCSSIPFLFITTRGMASMHSLAILLLGVVMLTTPVLAEYYKPPTYEPPIEKPPIYEPPPTEEPPPVYKPPIIHPPPNYKPPAHTPPIYHPPHEKPPPVYEPPYEKPPHEEPPREYQPPRENPSPEYEPPHHGKPPYENPPPEYKPPYEKPPPEYQPPHHEKPPPEYQPPHEKPPPEYTPPYEKPPPEYQPPHEKPPHESSPPEYQPPHEKPPHEHPPPEYQPPHEKPPHEHPPPEYQPPHEKPPHVHPPPEYQPPHEHPPPEYQPPHEKPPHVHPPPEYQPPYLKPPHEKSPYEPPPQEYQPPHEKPPQMKPPSEYQPPHEKPPHEHPPPEYQPPHVHPPPEHQPPHENPPHENPPPEYQPPHEKPPHYEHPPPENQPPHVHPPPEYKPPHEKPPHEHPPPEYQPPQENPPPEYKPPHEKPPHENTPPTHHPPHEKPPQEISLPEYQPPPPSTKYQPPHEKSPHENPPPEFAPPHKKLPPNYNPPRHEKPMPKYQPPHEKLPPVYKSPYVKTPPPQAYHPPPPIYHHPPFHPPPHVKPPVYETPLAKVPQMKKPTRYNTRPFGHYPPYKKNQ.

Residues 71–110 show a composition bias toward pro residues; it reads EKPPIYEPPPTEEPPPVYKPPIIHPPPNYKPPAHTPPIYH. The segment at 71-593 is disordered; that stretch reads EKPPIYEPPP…GHYPPYKKNQ (523 aa). Basic and acidic residues-rich tracts occupy residues 123–138 and 166–195; these read PYEKPPHEEPPREYQP and PPYEKPPPEYQPPHHEKPPPEYQPPHEKPP. Residues 196–210 show a composition bias toward pro residues; the sequence is PEYTPPYEKPPPEYQ. 2 stretches are compositionally biased toward basic and acidic residues: residues 227–265 and 275–292; these read PPHEKPPHEHPPPEYQPPHEKPPHEHPPPEYQPPHEKPP and PPHEHPPPEYQPPHEKPP. Residues 294–306 are compositionally biased toward pro residues; it reads VHPPPEYQPPYLK. 4 stretches are compositionally biased toward basic and acidic residues: residues 339–350, 360–372, 382–394, and 404–421; these read PPHEKPPHEHPP, PPPEHQPPHENPP, PPHEKPPHYEHPP, and PPPEYKPPHEKPPHEHPP. Over residues 422 to 435 the composition is skewed to pro residues; the sequence is PEYQPPQENPPPEY. Residues 506–522 are compositionally biased toward basic and acidic residues; it reads PRHEKPMPKYQPPHEKL. Over residues 532–558 the composition is skewed to pro residues; the sequence is KTPPPQAYHPPPPIYHHPPFHPPPHVK.

This sequence belongs to the nodulin 75 family.

Functionally, involved in early stages of root nodule development. The sequence is that of Early nodule-specific protein 2 from Medicago truncatula (Barrel medic).